The following is a 130-amino-acid chain: Phosphoribosyl-ATP pyrophosphatase (130 aa).

This sequence belongs to the PRA-PH family.

It is found in the cytoplasm. The enzyme catalyses 1-(5-phospho-beta-D-ribosyl)-ATP + H2O = 1-(5-phospho-beta-D-ribosyl)-5'-AMP + diphosphate + H(+). Its pathway is amino-acid biosynthesis; L-histidine biosynthesis; L-histidine from 5-phospho-alpha-D-ribose 1-diphosphate: step 2/9. This Albidiferax ferrireducens (strain ATCC BAA-621 / DSM 15236 / T118) (Rhodoferax ferrireducens) protein is Phosphoribosyl-ATP pyrophosphatase.